A 177-amino-acid chain; its full sequence is MATIVRQNGLTPIQETNEVKSFLKERGIDYDHWKVPHNASNLTDKEVLVDTEKEELLKKLDDRFETLKAKEGYQSRDLIVLHPNVSGLNEMLAKFDKVHYHTDEEVRYIVDGSGVFGFAFKDEKFLVHVYKDDFISVPRNTNHWFYLDDKKRIKAVRYFQDMSGWVPNYVEETNSLD.

Fe(2+) contacts are provided by histidine 99, histidine 101, glutamate 105, and histidine 143. 4 residues coordinate Ni(2+): histidine 99, histidine 101, glutamate 105, and histidine 143.

Belongs to the acireductone dioxygenase (ARD) family. Monomer. Fe(2+) is required as a cofactor. The cofactor is Ni(2+).

It carries out the reaction 1,2-dihydroxy-5-(methylsulfanyl)pent-1-en-3-one + O2 = 3-(methylsulfanyl)propanoate + CO + formate + 2 H(+). The catalysed reaction is 1,2-dihydroxy-5-(methylsulfanyl)pent-1-en-3-one + O2 = 4-methylsulfanyl-2-oxobutanoate + formate + 2 H(+). The protein operates within amino-acid biosynthesis; L-methionine biosynthesis via salvage pathway; L-methionine from S-methyl-5-thio-alpha-D-ribose 1-phosphate: step 5/6. Catalyzes 2 different reactions between oxygen and the acireductone 1,2-dihydroxy-3-keto-5-methylthiopentene (DHK-MTPene) depending upon the metal bound in the active site. Fe-containing acireductone dioxygenase (Fe-ARD) produces formate and 2-keto-4-methylthiobutyrate (KMTB), the alpha-ketoacid precursor of methionine in the methionine recycle pathway. Ni-containing acireductone dioxygenase (Ni-ARD) produces methylthiopropionate, carbon monoxide and formate, and does not lie on the methionine recycle pathway. The protein is Acireductone dioxygenase of Leptospira interrogans serogroup Icterohaemorrhagiae serovar copenhageni (strain Fiocruz L1-130).